We begin with the raw amino-acid sequence, 88 residues long: Arminin 7965 (88 aa).

An N-terminal signal peptide occupies residues 1–18; it reads MKTVFAILFLTFIAFTYA. Positions 19 to 57 are excised as a propeptide; sequence KSYEDVKEEIKNEVEREIFEDLEEESDVLDSNVRELNDA. Ala85 carries the alanine amide modification.

This sequence belongs to the arminin family. In terms of tissue distribution, expressed in entodermal epithelium along the body column.

It is found in the secreted. The protein localises to the target cell membrane. In terms of biological role, antimicrobial peptide with a broad-spectrum antimicrobial activity. Keeps its antibacterial activity under a wide range of salt concentrations that mimic physiological conditions of human blood, which is surprising, since Hydra is an obligate freshwater animal with nearly no salt tolerance. Does not affect red blood cells. This Hydra vulgaris (Hydra) protein is Arminin 7965.